The sequence spans 1805 residues: Obscurin-like protein 1 (1805 aa).

Residue serine 10 is modified to Phosphoserine. The 89-residue stretch at 12-100 (PCFLRFPRPV…GEAYAAAAVT (89 aa)) folds into the Ig-like 1 domain. The tract at residues 17-19 (FPR) is interaction with TTN. Cysteines 33 and 84 form a disulfide. The segment at 85 to 94 (RARNAAGEAY) is interaction with TTN. A compositionally biased stretch (pro residues) spans 104–122 (PPAPEPEPQSSECPPPPPG). The disordered stretch occupies residues 104–131 (PPAPEPEPQSSECPPPPPGTGEGAPVFL). 3 consecutive Ig-like domains span residues 128–225 (PVFL…ALLQ), 240–330 (PPVR…QTLS), and 339–425 (PRLR…ANVT). Intrachain disulfides connect cysteine 149–cysteine 209, cysteine 267–cysteine 319, and cysteine 362–cysteine 412. Residues 517–615 (PPGPPVLVEM…FNGSAHLVPT (99 aa)) form the Fibronectin type-III domain. Ig-like domains lie at 720-800 (PQDK…FSVT), 804-891 (PPVH…FTVT), 902-982 (PNGK…FTIT), 986-1075 (PPVR…VTVT), 1078-1165 (PERI…FNVS), 1176-1261 (PEAV…FNVQ), 1266-1351 (PPVK…ARLH), 1355-1442 (TELL…ARLS), 1536-1628 (PVTI…REVS), and 1702-1798 (PAQS…ADTQ). Intrachain disulfides connect cysteine 738-cysteine 788, cysteine 829-cysteine 879, cysteine 920-cysteine 970, cysteine 1011-cysteine 1061, cysteine 1103-cysteine 1153, and cysteine 1195-cysteine 1245. Cysteine 1558 and cysteine 1608 are joined by a disulfide.

In terms of assembly, component of the 3M complex, composed of core components CUL7, CCDC8 and OBSL1. Interacts with CCDC8. Interacts with CUL7; the interaction is direct. Interacts with FBXW8. Interacts (via N-terminal Ig-like domain) with TTN/titin (via C-terminal Ig-like domain); the interaction is direct. As to expression, expressed in granule neurons, with levels decreasing with neuronal maturation.

It is found in the cytoplasm. Its subcellular location is the perinuclear region. The protein resides in the golgi apparatus. In terms of biological role, core component of the 3M complex, a complex required to regulate microtubule dynamics and genome integrity. It is unclear how the 3M complex regulates microtubules, it could act by controlling the level of a microtubule stabilizer. Acts as a regulator of the Cul7-RING(FBXW8) ubiquitin-protein ligase, playing a critical role in the ubiquitin ligase pathway that regulates Golgi morphogenesis and dendrite patterning in brain. Required to localize CUL7 to the Golgi apparatus in neurons. The protein is Obscurin-like protein 1 (Obsl1) of Rattus norvegicus (Rat).